We begin with the raw amino-acid sequence, 301 residues long: Oxygen-dependent coproporphyrinogen-III oxidase (301 aa).

Ser-92 provides a ligand contact to substrate. The a divalent metal cation site is built by His-96 and His-106. The Proton donor role is filled by His-106. 108–110 is a substrate binding site; that stretch reads NVR. Residues His-145 and His-175 each contribute to the a divalent metal cation site. The important for dimerization stretch occupies residues 240-275; it reads YVEFNLVWDRGTLFGLQTGGRTESILMSMPPLVRWE. Residue 258-260 coordinates substrate; sequence GGR.

It belongs to the aerobic coproporphyrinogen-III oxidase family. As to quaternary structure, homodimer. A divalent metal cation serves as cofactor.

The protein resides in the cytoplasm. The enzyme catalyses coproporphyrinogen III + O2 + 2 H(+) = protoporphyrinogen IX + 2 CO2 + 2 H2O. The protein operates within porphyrin-containing compound metabolism; protoporphyrin-IX biosynthesis; protoporphyrinogen-IX from coproporphyrinogen-III (O2 route): step 1/1. Functionally, involved in the heme biosynthesis. Catalyzes the aerobic oxidative decarboxylation of propionate groups of rings A and B of coproporphyrinogen-III to yield the vinyl groups in protoporphyrinogen-IX. In Cronobacter sakazakii (strain ATCC BAA-894) (Enterobacter sakazakii), this protein is Oxygen-dependent coproporphyrinogen-III oxidase.